Reading from the N-terminus, the 955-residue chain is UPF0182 protein PMT_0755 (955 aa).

The next 9 membrane-spanning stretches (helical) occupy residues 25–45, 58–78, 107–127, 146–166, 178–198, 214–234, 264–284, 313–333, and 340–360; these read LLLSIAAFCLLMRVQVEWLWF, WLWQLGGLLLALLVVATCQLW, LLGCFVVVVGDLVLLSRLAWL, IWALVIPLSCVFISICVMLGN, CFCFSISIARGWGLWALALAI, FGLGQFPALAFALVVLLAQLI, CNFLRPLIGIILLTLSALLWL, SLASLAILVFAFLVIPFTWIQ, and LIASIIGVGAILLEVLLAPFV.

This sequence belongs to the UPF0182 family.

The protein localises to the cell membrane. The chain is UPF0182 protein PMT_0755 from Prochlorococcus marinus (strain MIT 9313).